The chain runs to 864 residues: Probable M1 family aminopeptidase 1 (864 aa).

Residues E149 and 289–293 (GAMEN) each bind substrate. H325 provides a ligand contact to Zn(2+). Residue E326 is the Proton acceptor of the active site. Zn(2+) contacts are provided by H329 and E348.

Belongs to the peptidase M1 family. Zn(2+) serves as cofactor.

This chain is Probable M1 family aminopeptidase 1, found in Encephalitozoon cuniculi (strain GB-M1) (Microsporidian parasite).